The primary structure comprises 104 residues: Gastrin (104 aa).

An N-terminal signal peptide occupies residues 1–21; the sequence is MQRLCVYVLILALALATFSEA. Residues 22-58 constitute a propeptide that is removed on maturation; it reads SWKPRSRLQDAPSGPGANRGLEPHGLDQLGPASHHRR. The interval 22 to 70 is disordered; the sequence is SWKPRSRLQDAPSGPGANRGLEPHGLDQLGPASHHRRQLGLQGPPQLVA. Residues Gln-59 and Gln-76 each carry the pyrrolidone carboxylic acid modification. Tyr-87 carries the post-translational modification Sulfotyrosine. Phenylalanine amide is present on Phe-92. Phosphoserine is present on Ser-96. The propeptide occupies 96–104; the sequence is SAEEGDQRP.

Belongs to the gastrin/cholecystokinin family.

Its subcellular location is the secreted. In terms of biological role, gastrin stimulates the stomach mucosa to produce and secrete hydrochloric acid and the pancreas to secrete its digestive enzymes. It also stimulates smooth muscle contraction and increases blood circulation and water secretion in the stomach and intestine. This is Gastrin (GAST) from Canis lupus familiaris (Dog).